A 480-amino-acid chain; its full sequence is Ribosomal RNA small subunit methyltransferase F (480 aa).

Residues 125 to 131 (AAAPGSK), Glu149, Asp176, and Asp194 contribute to the S-adenosyl-L-methionine site. The active-site Nucleophile is the Cys247.

It belongs to the class I-like SAM-binding methyltransferase superfamily. RsmB/NOP family.

Its subcellular location is the cytoplasm. The enzyme catalyses cytidine(1407) in 16S rRNA + S-adenosyl-L-methionine = 5-methylcytidine(1407) in 16S rRNA + S-adenosyl-L-homocysteine + H(+). Functionally, specifically methylates the cytosine at position 1407 (m5C1407) of 16S rRNA. In Enterobacter sp. (strain 638), this protein is Ribosomal RNA small subunit methyltransferase F.